A 443-amino-acid polypeptide reads, in one-letter code: Adenylate cyclase (443 aa).

A run of 6 helical transmembrane segments spans residues 47–69 (VLTI…QLAT), 74–93 (WYIA…VPLL), 98–120 (GLVA…GWDV), 124–143 (AGAQ…LVGI), 148–167 (LAVG…EFLV), and 180–202 (SVSF…WFAL). Residues 203 to 443 (RDTARAEAVM…RGAEPRTAGV (241 aa)) are Cytoplasmic-facing. The region spanning 251–378 (SVLFADIVGF…DAVNVASRME (128 aa)) is the Guanylate cyclase domain. Residues Asp-256 and Asp-300 each contribute to the Mg(2+) site.

Belongs to the adenylyl cyclase class-4/guanylyl cyclase family. In terms of assembly, homodimer. Can also exist as monomer. It depends on Mg(2+) as a cofactor. Mn(2+) serves as cofactor.

Its subcellular location is the cell membrane. The catalysed reaction is ATP = 3',5'-cyclic AMP + diphosphate. The sequence is that of Adenylate cyclase (cya) from Mycobacterium bovis (strain ATCC BAA-935 / AF2122/97).